A 399-amino-acid polypeptide reads, in one-letter code: Argininosuccinate synthase (399 aa).

9 to 17 (AYSGGLDTS) lines the ATP pocket. Tyrosine 88 is an L-citrulline binding site. An ATP-binding site is contributed by glycine 118. Threonine 120, asparagine 124, and aspartate 125 together coordinate L-aspartate. Residue asparagine 124 coordinates L-citrulline. Arginine 128, serine 176, glutamate 261, and tyrosine 273 together coordinate L-citrulline.

The protein belongs to the argininosuccinate synthase family. Type 1 subfamily. In terms of assembly, homotetramer.

The protein localises to the cytoplasm. It carries out the reaction L-citrulline + L-aspartate + ATP = 2-(N(omega)-L-arginino)succinate + AMP + diphosphate + H(+). Its pathway is amino-acid biosynthesis; L-arginine biosynthesis; L-arginine from L-ornithine and carbamoyl phosphate: step 2/3. The chain is Argininosuccinate synthase from Mycobacterium leprae (strain TN).